Here is a 103-residue protein sequence, read N- to C-terminus: Large ribosomal subunit protein bL21 (103 aa).

The protein belongs to the bacterial ribosomal protein bL21 family. In terms of assembly, part of the 50S ribosomal subunit. Contacts protein L20.

In terms of biological role, this protein binds to 23S rRNA in the presence of protein L20. The protein is Large ribosomal subunit protein bL21 of Maridesulfovibrio salexigens (strain ATCC 14822 / DSM 2638 / NCIMB 8403 / VKM B-1763) (Desulfovibrio salexigens).